A 192-amino-acid polypeptide reads, in one-letter code: uncharacterized protein (192 aa).

The 132-residue stretch at 29–160 folds into the Nudix hydrolase domain; that stretch reads QRQAAVLVPI…PLDIHRRGND (132 aa). The Nudix box motif lies at 67 to 89; that stretch reads GAVDNTDATLIAAALREAQEEVA. Mg(2+)-binding residues include glutamate 83 and glutamate 87.

It belongs to the Nudix hydrolase family. PCD1 subfamily. The cofactor is Mn(2+). Mg(2+) serves as cofactor.

Probably mediates the hydrolysis of some nucleoside diphosphate derivatives. This is an uncharacterized protein from Klebsiella pneumoniae (strain 342).